The primary structure comprises 73 residues: Putative membrane protein insertion efficiency factor (73 aa).

It belongs to the UPF0161 family.

The protein resides in the cell inner membrane. Its function is as follows. Could be involved in insertion of integral membrane proteins into the membrane. The protein is Putative membrane protein insertion efficiency factor of Parabacteroides distasonis (strain ATCC 8503 / DSM 20701 / CIP 104284 / JCM 5825 / NCTC 11152).